The chain runs to 111 residues: Large ribosomal subunit protein uL23 (111 aa).

This sequence belongs to the universal ribosomal protein uL23 family. As to quaternary structure, part of the 50S ribosomal subunit. Contacts protein L29, and trigger factor when it is bound to the ribosome.

In terms of biological role, one of the early assembly proteins it binds 23S rRNA. One of the proteins that surrounds the polypeptide exit tunnel on the outside of the ribosome. Forms the main docking site for trigger factor binding to the ribosome. In Chlamydia felis (strain Fe/C-56) (Chlamydophila felis), this protein is Large ribosomal subunit protein uL23.